Reading from the N-terminus, the 246-residue chain is Large ribosomal subunit protein uL3 (246 aa).

Glutamine 151 bears the N5-methylglutamine mark.

It belongs to the universal ribosomal protein uL3 family. As to quaternary structure, part of the 50S ribosomal subunit. Forms a cluster with proteins L14 and L19. Methylated by PrmB.

Functionally, one of the primary rRNA binding proteins, it binds directly near the 3'-end of the 23S rRNA, where it nucleates assembly of the 50S subunit. The sequence is that of Large ribosomal subunit protein uL3 from Bartonella quintana (strain Toulouse) (Rochalimaea quintana).